A 313-amino-acid polypeptide reads, in one-letter code: CRISPR-associated endonuclease Cas1 1 (313 aa).

Positions 144, 211, and 224 each coordinate Mn(2+). The segment at 288–313 is disordered; sequence PPLDAPEAVDPVIPPEEPSGDDGHRG.

This sequence belongs to the CRISPR-associated endonuclease Cas1 family. Homodimer, forms a heterotetramer with a Cas2 homodimer. It depends on Mg(2+) as a cofactor. Mn(2+) is required as a cofactor.

Its function is as follows. CRISPR (clustered regularly interspaced short palindromic repeat), is an adaptive immune system that provides protection against mobile genetic elements (viruses, transposable elements and conjugative plasmids). CRISPR clusters contain spacers, sequences complementary to antecedent mobile elements, and target invading nucleic acids. CRISPR clusters are transcribed and processed into CRISPR RNA (crRNA). Acts as a dsDNA endonuclease. Involved in the integration of spacer DNA into the CRISPR cassette. In Rhodospirillum rubrum (strain ATCC 11170 / ATH 1.1.1 / DSM 467 / LMG 4362 / NCIMB 8255 / S1), this protein is CRISPR-associated endonuclease Cas1 1.